The primary structure comprises 72 residues: Small proline-rich protein 2B (72 aa).

A compositionally biased stretch (low complexity) spans 1–11 (MSYQQQQCKQP). The segment at 1-20 (MSYQQQQCKQPCQPPPVCPT) is disordered. A run of 3 repeats spans residues 21 to 29 (PKCPEPCPP), 30 to 38 (PKCPEPCPP), and 39 to 47 (PKCPQPCPP). Residues 21 to 47 (PKCPEPCPPPKCPEPCPPPKCPQPCPP) form a 3 X 9 AA tandem repeats of P-K-C-P-[EQ]-P-C-P-P region. The segment at 42 to 72 (PQPCPPQQCQQKYPPVTPSPPCQPKYPPKSK) is disordered. Residues 56 to 72 (PVTPSPPCQPKYPPKSK) show a composition bias toward pro residues.

It belongs to the cornifin (SPRR) family. In terms of tissue distribution, suprabasal layers of squamous-differentiated tissues such as epidermis, esophagus, tongue and trachea.

The protein localises to the cytoplasm. Functionally, cross-linked envelope protein of keratinocytes. It is a keratinocyte protein that first appears in the cell cytosol, but ultimately becomes cross-linked to membrane proteins by transglutaminase. All that results in the formation of an insoluble envelope beneath the plasma membrane. The sequence is that of Small proline-rich protein 2B (SPRR2B) from Homo sapiens (Human).